Consider the following 1134-residue polypeptide: TBC1 domain family member 8 (1134 aa).

2 consecutive GRAM domains span residues 145–212 and 285–353; these read VKFE…ERTS and EFFR…EKME. The interval 433–466 is disordered; it reads ASQSSEEREEKRPLPHPEPLTAVFQQSGSQSPDS. Residues 437–447 show a composition bias toward basic and acidic residues; sequence SEEREEKRPLP. The segment covering 455 to 466 has biased composition (polar residues); the sequence is VFQQSGSQSPDS. Positions 504 to 691 constitute a Rab-GAP TBC domain; the sequence is GIPESLRGRL…HVVDCFFYDG (188 aa). A disordered region spans residues 1034–1070; the sequence is SSSGSCSQECEEPQASAPPEQDSVFAEAGKSPQAFPE.

In terms of biological role, may act as a GTPase-activating protein for Rab family protein(s). The chain is TBC1 domain family member 8 (Tbc1d8) from Mus musculus (Mouse).